The chain runs to 297 residues: Tyrosine recombinase XerD (297 aa).

Positions 1-86 (MKNLALIDLF…AMRKLFQYLY (86 aa)) constitute a Core-binding (CB) domain. The Tyr recombinase domain maps to 107–291 (RLPKYLTEQQ…AKERLKRLHE (185 aa)). Active-site residues include Arg-147, Lys-171, His-243, Arg-246, and His-269. The active-site O-(3'-phospho-DNA)-tyrosine intermediate is Tyr-278.

It belongs to the 'phage' integrase family. XerD subfamily. As to quaternary structure, forms a cyclic heterotetrameric complex composed of two molecules of XerC and two molecules of XerD.

The protein localises to the cytoplasm. Site-specific tyrosine recombinase, which acts by catalyzing the cutting and rejoining of the recombining DNA molecules. The XerC-XerD complex is essential to convert dimers of the bacterial chromosome into monomers to permit their segregation at cell division. It also contributes to the segregational stability of plasmids. This chain is Tyrosine recombinase XerD, found in Haemophilus influenzae (strain ATCC 51907 / DSM 11121 / KW20 / Rd).